We begin with the raw amino-acid sequence, 315 residues long: Acetaldehyde dehydrogenase 2 (315 aa).

11-14 (SGNI) is an NAD(+) binding site. The active-site Acyl-thioester intermediate is the Cys129. Residues 160 to 168 (SAGPGTRSN) and Asn290 each bind NAD(+).

This sequence belongs to the acetaldehyde dehydrogenase family.

The catalysed reaction is acetaldehyde + NAD(+) + CoA = acetyl-CoA + NADH + H(+). The chain is Acetaldehyde dehydrogenase 2 from Mycobacterium sp. (strain KMS).